Here is a 685-residue protein sequence, read N- to C-terminus: UvrABC system protein B (685 aa).

Residues 30–188 (DGVLRGDRWQ…QELVSLHYIR (159 aa)) enclose the Helicase ATP-binding domain. An ATP-binding site is contributed by 43-50 (GVTGSGKT). The Beta-hairpin signature appears at 96–119 (YYDFYQPEAYLPALDKYIAKDLRI). The region spanning 435–597 (QIDDLLAEIR…ITPRSIRKSL (163 aa)) is the Helicase C-terminal domain. The region spanning 641–676 (YAMVAELRLEMNEAAIQMEYEKAAYLRDEIARLMHG) is the UVR domain.

It belongs to the UvrB family. As to quaternary structure, forms a heterotetramer with UvrA during the search for lesions. Interacts with UvrC in an incision complex.

The protein resides in the cytoplasm. The UvrABC repair system catalyzes the recognition and processing of DNA lesions. A damage recognition complex composed of 2 UvrA and 2 UvrB subunits scans DNA for abnormalities. Upon binding of the UvrA(2)B(2) complex to a putative damaged site, the DNA wraps around one UvrB monomer. DNA wrap is dependent on ATP binding by UvrB and probably causes local melting of the DNA helix, facilitating insertion of UvrB beta-hairpin between the DNA strands. Then UvrB probes one DNA strand for the presence of a lesion. If a lesion is found the UvrA subunits dissociate and the UvrB-DNA preincision complex is formed. This complex is subsequently bound by UvrC and the second UvrB is released. If no lesion is found, the DNA wraps around the other UvrB subunit that will check the other stand for damage. The polypeptide is UvrABC system protein B (Chlorobium phaeobacteroides (strain DSM 266 / SMG 266 / 2430)).